We begin with the raw amino-acid sequence, 60 residues long: Temporin-CG2 (60 aa).

An N-terminal signal peptide occupies residues 1-22 (MFTLKKPLLVLFFLATINLSLC). Residues 23 to 43 (EQERNAEEERRDDDERNVEVE) constitute a propeptide, removed in mature form.

In terms of tissue distribution, expressed by the skin glands.

It localises to the secreted. Functionally, antimicrobial peptide active against a variety of Gram-positive bacterial strains but not against Gram-negative bacteria. Has weak antifungal activity against a slime mold isolate. Has weak hemolytic activity against human erythrocytes. In Amolops chunganensis (Chungan torrent frog), this protein is Temporin-CG2.